Consider the following 131-residue polypeptide: Large ribosomal subunit protein bL19 (131 aa).

The protein belongs to the bacterial ribosomal protein bL19 family.

Functionally, this protein is located at the 30S-50S ribosomal subunit interface and may play a role in the structure and function of the aminoacyl-tRNA binding site. The polypeptide is Large ribosomal subunit protein bL19 (Anaeromyxobacter sp. (strain K)).